Here is a 534-residue protein sequence, read N- to C-terminus: CTP synthase (534 aa).

The amidoligase domain stretch occupies residues 1-265 (MKYIVVTGGV…TTQLMKHLRL (265 aa)). CTP is bound at residue S12. S12 provides a ligand contact to UTP. 13-18 (GLGKGI) contributes to the ATP binding site. Position 53 (Y53) interacts with L-glutamine. Residue D70 participates in ATP binding. Residues D70 and E140 each contribute to the Mg(2+) site. CTP contacts are provided by residues 147–149 (DIE), 186–191 (KTKPTQ), and K222. UTP contacts are provided by residues 186–191 (KTKPTQ) and K222. The Glutamine amidotransferase type-1 domain occupies 289 to 530 (KLAIVGKYTN…VRAMCKYRKE (242 aa)). G352 is an L-glutamine binding site. The active-site Nucleophile; for glutamine hydrolysis is C379. Residues 380–383 (LGMQ), E403, and R460 each bind L-glutamine. Catalysis depends on residues H503 and E505.

The protein belongs to the CTP synthase family. Homotetramer.

The enzyme catalyses UTP + L-glutamine + ATP + H2O = CTP + L-glutamate + ADP + phosphate + 2 H(+). It catalyses the reaction L-glutamine + H2O = L-glutamate + NH4(+). The catalysed reaction is UTP + NH4(+) + ATP = CTP + ADP + phosphate + 2 H(+). The protein operates within pyrimidine metabolism; CTP biosynthesis via de novo pathway; CTP from UDP: step 2/2. Allosterically activated by GTP, when glutamine is the substrate; GTP has no effect on the reaction when ammonia is the substrate. The allosteric effector GTP functions by stabilizing the protein conformation that binds the tetrahedral intermediate(s) formed during glutamine hydrolysis. Inhibited by the product CTP, via allosteric rather than competitive inhibition. Catalyzes the ATP-dependent amination of UTP to CTP with either L-glutamine or ammonia as the source of nitrogen. Regulates intracellular CTP levels through interactions with the four ribonucleotide triphosphates. This chain is CTP synthase, found in Methanosarcina mazei (strain ATCC BAA-159 / DSM 3647 / Goe1 / Go1 / JCM 11833 / OCM 88) (Methanosarcina frisia).